A 192-amino-acid polypeptide reads, in one-letter code: dTDP-3-amino-3,6-dideoxy-alpha-D-galactopyranose 3-N-acetyltransferase (192 aa).

This sequence belongs to the transferase hexapeptide repeat family.

It catalyses the reaction dTDP-3-amino-3,6-dideoxy-alpha-D-galactopyranose + acetyl-CoA = dTDP-3-acetamido-3,6-dideoxy-alpha-D-galactopyranose + CoA + H(+). Functionally, catalyzes the transfer of an acetyl group to dTDP-D-Fucp3N to form dTDP-D-Fucp3NAc in the biosynthesis of dTDP-3-acetamido-3,6-dideoxy-alpha-D-galactose, a glycan chain of the S-layer. The chain is dTDP-3-amino-3,6-dideoxy-alpha-D-galactopyranose 3-N-acetyltransferase (fdtC) from Aneurinibacillus thermoaerophilus.